A 390-amino-acid polypeptide reads, in one-letter code: COP9/Signalosome and eIF3 complex-shared subunit 1 (390 aa).

The region spanning 188–351 is the PCI domain; it reads QAAKVMTALL…RTLIVSSYQH (164 aa).

This sequence belongs to the eIF-3 subunit M family. As to quaternary structure, component of the eukaryotic translation initiation factor 3 (eIF-3) complex. Within the eIF-3 complex, interacts directly with eif-3.F. Component of the CSN complex, composed of csn-1, csn-2, csn-3, csn-4, csn-5, csn-6 and csn-7. Within the CSN complex, interacts directly with csn-1 and csn-4.

The protein resides in the cytoplasm. Component of the eukaryotic translation initiation factor 3 (eIF-3) complex, which is involved in protein synthesis of a specialized repertoire of mRNAs and, together with other initiation factors, stimulates binding of mRNA and methionyl-tRNAi to the 40S ribosome. The eIF-3 complex specifically targets and initiates translation of a subset of mRNAs involved in cell proliferation (Potential). Component of the COP9 signalosome complex (CSN), a complex involved in various cellular and developmental processes. The CSN complex is an essential regulator of the ubiquitin (Ubl) conjugation pathway by mediating the deneddylation of the cullin subunits of the SCF-type E3 ligase complexes, leading to decrease the Ubl ligase activity of SCF. The CSN complex plays an essential role in embryogenesis and oogenesis and is required to regulate microtubule stability in the early embryo. Mediates mei-1 targeting for degradation at the meiosis to mitosis transition via deneddylation of cul-3. This chain is COP9/Signalosome and eIF3 complex-shared subunit 1, found in Caenorhabditis elegans.